We begin with the raw amino-acid sequence, 239 residues long: Putative zinc finger protein 132L (239 aa).

The segment at 20-40 (DASLSTKSPKREPSQEKEIKK) is disordered. Residues 28 to 40 (PKREPSQEKEIKK) show a composition bias toward basic and acidic residues. 2 C3H1-type zinc fingers span residues 44–68 (IKKN…HPGE) and 81–106 (RRKT…HDES). A disordered region spans residues 128–151 (PGECKFSHPPPPPPSPPSPPPKEE). Over residues 135 to 147 (HPPPPPPSPPSPP) the composition is skewed to pro residues.

The protein is Putative zinc finger protein 132L of Acheta domesticus (House cricket).